A 208-amino-acid polypeptide reads, in one-letter code: Imidazoleglycerol-phosphate dehydratase (208 aa).

It belongs to the imidazoleglycerol-phosphate dehydratase family.

Its subcellular location is the cytoplasm. It catalyses the reaction D-erythro-1-(imidazol-4-yl)glycerol 3-phosphate = 3-(imidazol-4-yl)-2-oxopropyl phosphate + H2O. The protein operates within amino-acid biosynthesis; L-histidine biosynthesis; L-histidine from 5-phospho-alpha-D-ribose 1-diphosphate: step 6/9. This Hyphomonas neptunium (strain ATCC 15444) protein is Imidazoleglycerol-phosphate dehydratase.